Consider the following 365-residue polypeptide: Protein AC54 (365 aa).

In terms of assembly, interacts with C42 and VP80. Interacts with protein 38K.

The protein localises to the virion. Functionally, structural protein that participates in nucleocapsid assembly. Plays an essential role in the proper localization of the major capsid protein VP39, and the minor capsid protein 38K into the capsid assembly site. This Lepidoptera (butterflies and moths) protein is Protein AC54 (AC54).